A 559-amino-acid chain; its full sequence is MATDLSEAEPVHHKALPLLTGTQLIHTDKLSEKAEDDTMPIRRSVNSSRETPPKSKPAEGGEEVKADAEATSEESASAGEEQENETLPAAAPSEAEQPKEPENEEKGETKSSVETKKDDKDQSKEKEKKVKKTIPAWATLSASQLARAQKQTQMAATSRPKMDAILTEAIKACFQKSGASVVAIRKYIIHKYPSLELERRGYLLKQALKRELERGIIRQVKGKGASGSFVVVSNAGKTVQKARDRKKSTSVSTPEQQVKLEDILPLAFTRLCEPKEASYSLIKKYVSQYYPKLKVDIRPQLLKNALQRAVEKGQLEQITGKGASGTFQLKKSGEKPLLGGTLMEDAILSAIAAMNEPKTCSTTALKKYILENHPGTNSNFQVHLLKRTLQRCEKNGWLEQISGKGFSGTFQLCFPYYPSPDVLYPEKQQDEDSEESQEEEEEESEEEEESEEEESEEEEPPPKKRMQKRPPPKSRSRAPPMKRRESKPKPRKTPAAHQGKAKPPPKVKTPVKKAKPAAPAIKKPSGGSSSKKPTASGRKEVKPSAKGKSAMRKSLRAKK.

The tract at residues 1–132 is disordered; the sequence is MATDLSEAEP…SKEKEKKVKK (132 aa). Composition is skewed to basic and acidic residues over residues 51-68 and 96-128; these read TPPKSKPAEGGEEVKADA and EQPKEPENEEKGETKSSVETKKDDKDQSKEKEK. H15 domains follow at residues 158-233, 256-331, and 339-414; these read SRPK…VVVS, QQVK…QLKK, and GGTL…QLCF. Positions 256-260 match the PxVxL motif motif; sequence QQVKL. A disordered region spans residues 421–559; the sequence is DVLYPEKQQD…AMRKSLRAKK (139 aa). The span at 429 to 459 shows a compositional bias: acidic residues; it reads QDEDSEESQEEEEEESEEEEESEEEESEEEE. Positions 463–515 are enriched in basic residues; it reads KKRMQKRPPPKSRSRAPPMKRRESKPKPRKTPAAHQGKAKPPPKVKTPVKKAK. Residues 516 to 533 show a composition bias toward low complexity; it reads PAAPAIKKPSGGSSSKKP. Positions 549–559 are enriched in basic residues; sequence SAMRKSLRAKK.

Its subcellular location is the nucleus. It is found in the chromosome. In terms of biological role, component of heterochromatin that maintains heterochromatin integrity during G1/S progression and regulates the duration of G1 phase to critically influence cell proliferative capacity. This chain is Heterochromatin protein 1-binding protein 3 (HP1BP3), found in Gallus gallus (Chicken).